Reading from the N-terminus, the 142-residue chain is Large ribosomal subunit protein uL13 (142 aa).

It belongs to the universal ribosomal protein uL13 family. In terms of assembly, part of the 50S ribosomal subunit.

Its function is as follows. This protein is one of the early assembly proteins of the 50S ribosomal subunit, although it is not seen to bind rRNA by itself. It is important during the early stages of 50S assembly. The sequence is that of Large ribosomal subunit protein uL13 from Aliivibrio fischeri (strain ATCC 700601 / ES114) (Vibrio fischeri).